Reading from the N-terminus, the 587-residue chain is Arginine--tRNA ligase (587 aa).

The 'HIGH' region signature appears at 127–137 (PNLAKEMHVGH).

Belongs to the class-I aminoacyl-tRNA synthetase family. As to quaternary structure, monomer.

The protein resides in the cytoplasm. It catalyses the reaction tRNA(Arg) + L-arginine + ATP = L-arginyl-tRNA(Arg) + AMP + diphosphate. This chain is Arginine--tRNA ligase, found in Pseudomonas aeruginosa (strain ATCC 15692 / DSM 22644 / CIP 104116 / JCM 14847 / LMG 12228 / 1C / PRS 101 / PAO1).